The chain runs to 222 residues: UPF0441 protein CKO_04429 (222 aa).

A compositionally biased stretch (low complexity) spans 177–194; sequence TVPKTAMAPKPATTTTVT. Residues 177 to 222 are disordered; that stretch reads TVPKTAMAPKPATTTTVTRGGFGESVAKQSTMQRSATGTSNRSMGG. A compositionally biased stretch (polar residues) spans 203 to 222; the sequence is AKQSTMQRSATGTSNRSMGG.

It belongs to the UPF0441 family.

This Citrobacter koseri (strain ATCC BAA-895 / CDC 4225-83 / SGSC4696) protein is UPF0441 protein CKO_04429.